The following is a 490-amino-acid chain: Colicin-5 (490 aa).

A compositionally biased stretch (polar residues) spans 1 to 20 (MDKVTDNSPDVESTESTEGS). Disordered regions lie at residues 1–29 (MDKV…VDTG) and 146–171 (QKAR…EIAR). Residues 146 to 170 (QKAREEAEAAEKALREAERQRDEIA) show a composition bias toward basic and acidic residues. A helical transmembrane segment spans residues 447–467 (IVALMFSFIVGVPLGFWGIAI).

Belongs to the channel forming colicin family.

The protein localises to the host membrane. Functionally, this colicin is a channel-forming colicin. This class of transmembrane toxins depolarize the cytoplasmic membrane, leading to dissipation of cellular energy. In terms of biological role, colicins are polypeptide toxins produced by and active against E.coli and closely related bacteria. The protein is Colicin-5 (cfa) of Escherichia coli.